Reading from the N-terminus, the 981-residue chain is Beta-glucuronidase (981 aa).

The active-site Nucleophile is the Glu-500. The Mg(2+) site is built by Asn-561, Trp-562, Ile-563, Ser-581, and Glu-583.

Belongs to the glycosyl hydrolase 2 family.

It localises to the periplasm. The enzyme catalyses a beta-D-glucuronoside + H2O = D-glucuronate + an alcohol. Beta-glucuronidase involved in ulvan degradation. Ulvan is the main polysaccharide component of the Ulvales (green seaweed) cell wall. It is composed of disaccharide building blocks comprising 3-sulfated rhamnose (Rha3S) linked to D-glucuronic acid (GlcA), L-iduronic acid (IduA), or D-xylose (Xyl). Beta-glucuronidase removes GlcA side chains present on some O2 residues of Rha3S. Can remove the GlcA side chains from polymeric ulvan or from smaller oligomers. This chain is Beta-glucuronidase, found in Formosa agariphila (strain DSM 15362 / KCTC 12365 / LMG 23005 / KMM 3901 / M-2Alg 35-1).